Consider the following 537-residue polypeptide: Chaperonin GroEL 1 (537 aa).

ATP-binding positions include 29–32 (TLGP), 86–90 (DGTTT), Gly-413, 478–480 (NAA), and Asp-494.

It belongs to the chaperonin (HSP60) family. Forms a cylinder of 14 subunits composed of two heptameric rings stacked back-to-back. Interacts with the co-chaperonin GroES.

It localises to the cytoplasm. The catalysed reaction is ATP + H2O + a folded polypeptide = ADP + phosphate + an unfolded polypeptide.. In terms of biological role, together with its co-chaperonin GroES, plays an essential role in assisting protein folding. The GroEL-GroES system forms a nano-cage that allows encapsulation of the non-native substrate proteins and provides a physical environment optimized to promote and accelerate protein folding. The polypeptide is Chaperonin GroEL 1 (Corynebacterium efficiens (strain DSM 44549 / YS-314 / AJ 12310 / JCM 11189 / NBRC 100395)).